A 379-amino-acid chain; its full sequence is Homoserine O-succinyltransferase (379 aa).

Positions 48-357 (NAVLICHALS…SAHGHDAFLM (310 aa)) constitute an AB hydrolase-1 domain. The Nucleophile role is filled by serine 154. Residue arginine 224 coordinates substrate. Active-site residues include aspartate 319 and histidine 352. Position 353 (aspartate 353) interacts with substrate.

The protein belongs to the AB hydrolase superfamily. MetX family. Homodimer.

It localises to the cytoplasm. It catalyses the reaction L-homoserine + succinyl-CoA = O-succinyl-L-homoserine + CoA. It functions in the pathway amino-acid biosynthesis; L-methionine biosynthesis via de novo pathway; O-succinyl-L-homoserine from L-homoserine: step 1/1. In terms of biological role, transfers a succinyl group from succinyl-CoA to L-homoserine, forming succinyl-L-homoserine. This chain is Homoserine O-succinyltransferase, found in Neisseria gonorrhoeae (strain ATCC 700825 / FA 1090).